The sequence spans 384 residues: Spermidine/putrescine import ATP-binding protein PotA (384 aa).

The ABC transporter domain occupies 6–238; sequence ITFNNVSKTF…PINHFVANFI (233 aa). ATP is bound at residue 40 to 47; it reads GASGSGKS.

The protein belongs to the ABC transporter superfamily. Spermidine/putrescine importer (TC 3.A.1.11.1) family. The complex is composed of two ATP-binding proteins (PotA), two transmembrane proteins (PotB and PotC) and a solute-binding protein (PotD).

The protein resides in the cell membrane. The catalysed reaction is ATP + H2O + polyamine-[polyamine-binding protein]Side 1 = ADP + phosphate + polyamineSide 2 + [polyamine-binding protein]Side 1.. Functionally, part of the ABC transporter complex PotABCD involved in spermidine/putrescine import. Responsible for energy coupling to the transport system. This is Spermidine/putrescine import ATP-binding protein PotA from Streptococcus pyogenes serotype M6 (strain ATCC BAA-946 / MGAS10394).